Reading from the N-terminus, the 255-residue chain is Homeobox protein DLX-1 (255 aa).

Residues 1-14 (MTMTTMPESLNSPV) show a composition bias toward polar residues. Disordered regions lie at residues 1–38 (MTMT…MSHG) and 95–118 (SLAQ…EGGE). Low complexity predominate over residues 25–36 (PPNQQMSPSPMS). Residues 100–112 (RLEDPGADSEKST) show a composition bias toward basic and acidic residues. The homeobox DNA-binding region spans 128 to 187 (IRKPRTIYSSLQLQALNRRFQQTQYLALPERAELAASLGLTQTQVKIWFQNKRSKFKKLM). Residues 204 to 230 (ALSAGSPPVPPGWNPNSSSGKGSGGNA) form a disordered region.

It belongs to the distal-less homeobox family. As to quaternary structure, interacts with SMAD4 (via homeobox DNA-binding domain). Interacts (via homeobox DNA-binding domain) with POU4F2; this interaction suppresses DLX1-mediated transcriptional activity in postnatal retina and enhances retinal ganglion cell (RGC) differentiation. As to expression, expressed in hematopoietic cell lines.

It is found in the nucleus. Functionally, plays a role as a transcriptional activator or repressor. Inhibits several cytokine signaling pathways, such as TGFB1, activin-A/INHBA and BMP4 by interfering with the transcriptional stimulatory activity of transcription factors, such as MSX2, FAST2, SMAD2 and SMAD3 during hematopoietic cell differentiation. Plays a role in terminal differentiation of interneurons, such as amacrine and bipolar cells in the developing retina. Likely to play a regulatory role in the development of the ventral forebrain. May play a role in craniofacial patterning and morphogenesis and may be involved in the early development of diencephalic subdivisions. This chain is Homeobox protein DLX-1 (DLX1), found in Homo sapiens (Human).